The following is a 332-amino-acid chain: MHPLLFLAGLCLGVASAAPQLYQSLDARWSQWKATHGKLYGMDEVWRRAVWERNMKMIEQHNREHSQGKHTFTMAMNAFGDMTNEEFRQVMNGLKIQKRKKWKVFQAPFFVEIPSSVDWREKGYVTPVKDQGYCLCCWAFSATGALEGQMFRKTGKLVSLSEQNLVDCSQTEGNEGYSGGLIDDAFQYVKDNGGLDSEESYPYHAQGDSCKYRPENSVANVTDYWDIPSKENELMITLAAVGPISAAIDASLDTFRFYKEGIYYDPSCSSEDVDHGVLVVGYGADGTETENKKYWIIKNSWGTDWGMDGYIKMAKDRDNHCGIASLASFPTV.

The first 17 residues, 1–17 (MHPLLFLAGLCLGVASA), serve as a signal peptide directing secretion. The propeptide at 18 to 112 (APQLYQSLDA…KVFQAPFFVE (95 aa)) is activation peptide. Glu-121 contributes to the Zn(2+) binding site. Cys-137 is an active-site residue. Glu-162, Asp-183, Glu-198, and Asp-208 together coordinate Zn(2+). Cys-168 and Cys-210 are oxidised to a cystine. The N-linked (GlcNAc...) asparagine glycan is linked to Asn-220. Zn(2+) is bound by residues Asp-226, Asp-249, Asp-272, and Asp-274. A disulfide bridge connects residues Cys-268 and Cys-321. His-275 is a catalytic residue. The propeptide occupies 288-290 (ETE). Residue Asn-299 is part of the active site.

Belongs to the peptidase C1 family. Dimer of a heavy and a light chain linked by disulfide bonds. Interacts with Long isoform of CD74/Ii chain; the interaction stabilizes the conformation of mature CTSL. Post-translationally, during export along the endocytic pathway, pro-CTSL undergoes several proteolytic cleavages to generate the CTSL single-chain and two-chain mature forms, composed of a heavy chain linked to a light chain by disulfide bonds. Autocleavage; produces the single-chain CTSL after cleavage of the propeptide. The cleavage can be intermolecular. As to expression, expressed in the endometrium.

Its subcellular location is the lysosome. It is found in the apical cell membrane. The protein resides in the cytoplasmic vesicle. It localises to the secretory vesicle. The protein localises to the chromaffin granule. Its subcellular location is the secreted. It is found in the extracellular space. The enzyme catalyses Specificity close to that of papain. As compared to cathepsin B, cathepsin L exhibits higher activity toward protein substrates, but has little activity on Z-Arg-Arg-NHMec, and no peptidyl-dipeptidase activity.. Inhibited by the propeptide produced by autocleavage. Long isoform of CD74/Ii chain stabilizes the conformation of mature CTSL by binding to its active site and serving as a chaperone to help maintain a pool of mature enzyme in endocytic compartments and extracellular space of APCs. IFNG enhances the conversion into the CTSL mature and active form. Inhibited by CST6. Inhibited by the glycopeptide antibiotic teicoplanin. Inhibited by amantadine. Functionally, thiol protease important for the overall degradation of proteins in lysosomes. Plays a critical for normal cellular functions such as general protein turnover, antigen processing and bone remodeling. Involved in the solubilization of cross-linked TG/thyroglobulin and in the subsequent release of thyroid hormone thyroxine (T4) by limited proteolysis of TG/thyroglobulin in the thyroid follicle lumen. In neuroendocrine chromaffin cells secretory vesicles, catalyzes the prohormone proenkephalin processing to the active enkephalin peptide neurotransmitter. In thymus, regulates CD4(+) T cell positive selection by generating the major histocompatibility complex class II (MHCII) bound peptide ligands presented by cortical thymic epithelial cells. Also mediates invariant chain processing in cortical thymic epithelial cells. Major elastin-degrading enzyme at neutral pH. Accumulates as a mature and active enzyme in the extracellular space of antigen presenting cells (APCs) to regulate degradation of the extracellular matrix in the course of inflammation. Secreted form generates endostatin from COL18A1. Critical for cardiac morphology and function. Plays an important role in hair follicle morphogenesis and cycling, as well as epidermal differentiation. Required for maximal stimulation of steroidogenesis by TIMP1. In Felis catus (Cat), this protein is Procathepsin L (CTSL).